We begin with the raw amino-acid sequence, 711 residues long: Cyclic-di-AMP phosphodiesterase PgpH (711 aa).

Positions 114–133 (KSSEEGSKSPSEKSMVKSVK) are disordered. 7 consecutive transmembrane segments (helical) span residues 275–295 (LFKP…TLVY), 311–331 (ILLF…VSLF), 336–356 (YNNI…KLLM), 360–380 (IAIL…NQGV), 384–404 (FNYV…LFLG), 413–433 (LQTG…LLLI), and 448–468 (LMGV…MPFF). One can recognise an HD domain in the interval 501-643 (TYHHSVMVAN…ISVADSVEAA (143 aa)). Residues histidine 504, histidine 533, aspartate 534, histidine 570, histidine 594, and histidine 595 each coordinate Mn(2+). Histidine 504 lines the substrate pocket. Tyrosine 621 and aspartate 638 together coordinate substrate. Aspartate 638 contributes to the Mn(2+) binding site.

This sequence belongs to the PgpH phosphodiesterase family. It depends on Mn(2+) as a cofactor.

It localises to the cell membrane. The enzyme catalyses 3',3'-c-di-AMP + H2O = 5'-O-phosphonoadenylyl-(3'-&gt;5')-adenosine + H(+). Functionally, probably has phosphodiesterase (PDE) activity against cyclic-di-AMP (c-di-AMP); may be the major c-di-AMP PDE in the cell. In B.subtilis c-di-AMP is a second messenger that mediates growth, DNA repair and cell wall homeostasis; it is toxic when present in excess. The chain is Cyclic-di-AMP phosphodiesterase PgpH from Bacillus subtilis (strain 168).